Consider the following 393-residue polypeptide: Thyrotropin-releasing hormone receptor (393 aa).

Topologically, residues 1 to 28 (MENDTVSEMNQTELQPQAAVALEYQVVT) are extracellular. N-linked (GlcNAc...) asparagine glycosylation is found at N3 and N10. A helical membrane pass occupies residues 29-51 (ILLVVIICGLGIVGNIMVVLVVM). Topologically, residues 52-61 (RTKHMRTPTN) are cytoplasmic. The helical transmembrane segment at 62–83 (CYLVSLAVADLMVLVAAGLPNI) threads the bilayer. At 84–99 (TDSIYGSWVYGYVGCL) the chain is on the extracellular side. Cysteines 98 and 179 form a disulfide. A helical transmembrane segment spans residues 100-121 (CITYLQYLGINASSCSITAFTI). The Cytoplasmic segment spans residues 122–144 (ERYIAICHPIKAQFLCTFSRAKK). A helical membrane pass occupies residues 145-168 (IIIFVWAFTSIYCMLWFFLLDLNI). Topologically, residues 169 to 193 (STYKNAVVVSCGYKISRNYYSPIYL) are extracellular. The helical transmembrane segment at 194–215 (MDFGVFYVVPMILATVLYGFIA) threads the bilayer. At 216-266 (RILFLNPIPSDPKENSKMWKNDSIHQNKNLNLNATNRCFNSTVSSRKQVTK) the chain is on the cytoplasmic side. Residues 267-288 (MLAVVVILFALLWMPYRTLVVV) traverse the membrane as a helical segment. The Extracellular segment spans residues 289–296 (NSFLSSPF). The chain crosses the membrane as a helical span at residues 297–319 (QENWFLLFCRICIYLNSAINPVI). Topologically, residues 320 to 393 (YNLMSQKFRA…FDDTCLASEN (74 aa)) are cytoplasmic.

This sequence belongs to the G-protein coupled receptor 1 family.

Its subcellular location is the cell membrane. In terms of biological role, receptor for thyrotropin-releasing hormone (TRH). Upon ligand binding, this G-protein-coupled receptor triggers activation of the phosphatidylinositol (IP3)-calcium-protein kinase C (PKC) pathway. The polypeptide is Thyrotropin-releasing hormone receptor (Trhr) (Mus musculus (Mouse)).